Here is a 113-residue protein sequence, read N- to C-terminus: Large ribosomal subunit protein uL22 (113 aa).

It belongs to the universal ribosomal protein uL22 family. Part of the 50S ribosomal subunit.

Its function is as follows. This protein binds specifically to 23S rRNA; its binding is stimulated by other ribosomal proteins, e.g. L4, L17, and L20. It is important during the early stages of 50S assembly. It makes multiple contacts with different domains of the 23S rRNA in the assembled 50S subunit and ribosome. The globular domain of the protein is located near the polypeptide exit tunnel on the outside of the subunit, while an extended beta-hairpin is found that lines the wall of the exit tunnel in the center of the 70S ribosome. This Bacillus subtilis (strain 168) protein is Large ribosomal subunit protein uL22.